A 365-amino-acid polypeptide reads, in one-letter code: Quinolone epoxide rearrangement protein asqO (365 aa).

The protein belongs to the quinolone epoxide rearrangement protein penF family.

The catalysed reaction is (1'E,3'E)-5-(3,3-dimethyloxiran-2-yl)-3-methylhexa-1,3-dienyl-quinolinone B = aspoquinolone A. It carries out the reaction (1'E,3'E)-5-(3,3-dimethyloxiran-2-yl)-3-methylhexa-1,3-dienyl-quinolinone B = aspoquinolone B. The protein operates within secondary metabolite biosynthesis. Its pathway is alkaloid biosynthesis. It participates in mycotoxin biosynthesis. Its function is as follows. Quinolone epoxide rearrangement protein; part of the gene cluster that mediates the biosynthesis of the aspoquinolone mycotoxins. Within the pathway, asqO catalyzes an enzymatic 3-exo-tet cyclization to yield the cyclopropyl-THF ring system in aspoquinolone. The first step of the pathway is catalyzed by the nonribosomal peptide synthetase asqK that condenses anthranilic acid and O-methyl-L-tyrosine to produce 4'-methoxycyclopeptin. 4'-methoxycyclopeptin is then converted to 4'-methoxydehydrocyclopeptin by the ketoglutarate-dependent dioxygenase asqJ. AsqJ also converts its first product 4'-methoxydehydrocyclopeptin to 4'-methoxycyclopenin. The following conversion of 4'-methoxycyclopenin into 4'-methoxyviridicatin is catalyzed by the cyclopenase asqI. 4'-methoxyviridicatin is the precursor of quinolone natural products, and is further converted to quinolinone B. The prenyltransferase asqH1 then catalyzes the canonical Friedel-Crafts alkylation of quinolinone B with dimethylallyl cation to yield dimethylallyl quinolone, which is subjected to FAD-dependent dehydrogenation by the FAD-linked oxidoreductase asqF to yield conjugated aryl diene. The delta(3') double bond then serves as the site of the second alkylation with DMAPP catalyzed by the prenyltransferase asqH2 to yield a carbenium ion intermediate, which can be attacked by H(2)O to yield a styrenyl quinolone containing a C3'-hydroxyprenyl chain. The FAD-dependent monooxygenase asqG performs epoxidation of the terminal C7'-C8' olefin. Finally, after dehydratation of the epoxide at C3 by asqC, the quinolone epoxide rearrangement protein asqO catalyzes an enzymatic 3-exo-tet cyclization to yield the cyclopropyl-THF ring system in aspoquinolone. The polypeptide is Quinolone epoxide rearrangement protein asqO (Emericella nidulans (strain FGSC A4 / ATCC 38163 / CBS 112.46 / NRRL 194 / M139) (Aspergillus nidulans)).